Consider the following 99-residue polypeptide: Thylakoid membrane protein ssl2009 (99 aa).

The chain crosses the membrane as a helical span at residues 10–30 (GFLLGTVIGGVVGGILGSVLA). The stretch at 50-84 (NLDSEENIELARRRLEDKIAQLNLVIDDVRDQLGH) forms a coiled coil.

The protein resides in the cellular thylakoid membrane. In Synechocystis sp. (strain ATCC 27184 / PCC 6803 / Kazusa), this protein is Thylakoid membrane protein ssl2009.